A 488-amino-acid chain; its full sequence is Surface lipoprotein assembly modifier 1 (488 aa).

Residues 1 to 31 form the signal peptide; the sequence is MVIFYFCGKTFMPARNRWMLLLPLLASAAYA. The N-terminal domain stretch occupies residues 32–202; it reads EETPREPDLR…LYRKALRERD (171 aa). 2 TPR repeats span residues 118-151 and 171-204; these read MLAL…QPDA and AADQ…RDAW. Residues 203–488 are C-terminal probable beta barrel, partially restores export of lipoproteins; that stretch reads AWKVNGGFSV…RAFVEFNKTF (286 aa). Transmembrane regions (beta stranded) follow at residues 204 to 214, 241 to 252, 257 to 267, 280 to 291, 294 to 304, 316 to 325, 330 to 340, 354 to 364, 368 to 377, 393 to 402, 407 to 417, 439 to 448, 455 to 464, and 478 to 488; these read WKVNGGFSVTR, VNYRLGAEKKWS, WYTTAGGDVSG, TAGVSGGIGFAD, KDAGLAVFHER, NGARLYFNRW, WQTLSSAEWGR, LQISNSLVFYR, QYWMGGLDFY, GLRFAWGQEW, LSSLLRLGAAK, LNTSLSLWHR, ITPRLTLSHR, and NRAFVEFNKTF.

Belongs to the Slam family. Interacts with the C-terminal domain of surface lipoprotein TbpB.

The protein localises to the cell outer membrane. Functionally, required for correct export to the cell surface of some cell outer membrane lipoproteins both in Neisseria and heterologously in E.coli. This chain is Surface lipoprotein assembly modifier 1, found in Neisseria meningitidis serogroup B (strain ATCC BAA-335 / MC58).